A 491-amino-acid chain; its full sequence is ADP-specific phosphofructokinase (491 aa).

In terms of domain architecture, ADPK spans 4–486 (EEWEQRHAEA…FVAMLAKIKQ (483 aa)). Residues Glu-281, Glu-312, and Asp-470 each contribute to the Mg(2+) site. Asp-470 functions as the Proton acceptor in the catalytic mechanism.

This sequence belongs to the carbohydrate kinase PfkC family. Mg(2+) serves as cofactor.

The protein localises to the cytoplasm. It carries out the reaction beta-D-fructose 6-phosphate + ADP = beta-D-fructose 1,6-bisphosphate + AMP + H(+). The protein operates within carbohydrate degradation; glycolysis. Catalyzes the phosphorylation of fructose 6-phosphate to fructose 1,6-bisphosphate using ADP as the phosphate donor. The sequence is that of ADP-specific phosphofructokinase from Methanosarcina acetivorans (strain ATCC 35395 / DSM 2834 / JCM 12185 / C2A).